Consider the following 405-residue polypeptide: Magnesium-protoporphyrin IX monomethyl ester [oxidative] cyclase, chloroplastic (405 aa).

The transit peptide at 1 to 44 (MAAEMALVKPITPKFINPMRTFSSSSKFSTIKMSATSQSNTTTT) directs the protein to the chloroplast. Residues 33-47 (MSATSQSNTTTTATK) are compositionally biased toward low complexity. Residues 33–54 (MSATSQSNTTTTATKPSKKGNK) are disordered.

The protein belongs to the AcsF family. Fe cation serves as cofactor.

It localises to the plastid. The protein resides in the chloroplast. It carries out the reaction Mg-protoporphyrin IX 13-monomethyl ester + 3 NADPH + 3 O2 + 2 H(+) = 3,8-divinyl protochlorophyllide a + 3 NADP(+) + 5 H2O. It functions in the pathway porphyrin-containing compound metabolism; chlorophyll biosynthesis. Catalyzes the formation of the isocyclic ring in chlorophyll biosynthesis. Mediates the cyclase reaction, which results in the formation of divinylprotochlorophyllide (Pchlide) characteristic of all chlorophylls from magnesium-protoporphyrin IX 13-monomethyl ester (MgPMME). This is Magnesium-protoporphyrin IX monomethyl ester [oxidative] cyclase, chloroplastic (CRD1) from Euphorbia esula (Leafy spurge).